Consider the following 204-residue polypeptide: Guanine-specific ADP-ribosyl transferase (204 aa).

The N-terminal stretch at 1–42 (MITTSLRRRTAAAVLSLSAVLATTAATAPGAAPAPSAAPAKA) is a signal peptide. Cysteines 46 and 76 form a disulfide. NADH-binding positions include 81-85 (RSDSR) and lysine 98. GDP is bound by residues 111–114 (VLVN), 132–134 (WYK), tryptophan 159, and glutamine 162. Positions 132–136 (WYKSG) match the PN (phosphate-nicotinamide) loop motif. A disulfide bridge connects residues cysteine 180 and cysteine 194.

Belongs to the pierisin ADP-ribosyltransferase family. In terms of assembly, monomer.

Its subcellular location is the secreted. It catalyses the reaction guanosine + NAD(+) = N(2)-(ADP-D-ribosyl)-guanosine + nicotinamide + H(+). The catalysed reaction is a 2'-deoxyguanosine in DNA + NAD(+) = an N(2)-(ADP-L-ribosyl)-2'-deoxyguanosine in DNA + nicotinamide + H(+). It carries out the reaction 2'-deoxyguanosine + NAD(+) = N(2)-(ADP-D-ribosyl)-2'-deoxyguanosine + nicotinamide + H(+). The enzyme catalyses GMP + NAD(+) = N(2)-(ADP-D-ribosyl)-GMP + nicotinamide + H(+). It catalyses the reaction GTP + NAD(+) = N(2)-(ADP-D-ribosyl)-GTP + nicotinamide + H(+). The catalysed reaction is dGMP + NAD(+) = N(2)-(ADP-D-ribosyl)-dGMP + nicotinamide + H(+). It carries out the reaction dGTP + NAD(+) = N(2)-(ADP-D-ribosyl)-dGTP + nicotinamide + H(+). The enzyme catalyses 3',5'-cyclic GMP + NAD(+) = N(2)-(ADP-D-ribosyl)-3',5'-cyclic GMP + nicotinamide + H(+). It catalyses the reaction guanine + NAD(+) = N(2)-(ADP-D-ribosyl)-guanine + nicotinamide + H(+). The catalysed reaction is GDP + NAD(+) = N(2)-(ADP-D-ribosyl)-GDP + nicotinamide + H(+). With respect to regulation, inhibited by NADH. In terms of biological role, ADP-ribosylates the N2 amino group of guanosine, deoxyguanosine, GMP, dGMP, cGMP, GTP and dGTP; oligo-guanosine, oligo-deoxyguanosine and tRNA are ADP-ribosylated less efficiently, while dsDNA is a very poor substrate. Also acts on GDP. This chain is Guanine-specific ADP-ribosyl transferase, found in Streptomyces coelicolor (strain ATCC BAA-471 / A3(2) / M145).